A 132-amino-acid chain; its full sequence is uncharacterized protein (132 aa).

The chain crosses the membrane as a helical span at residues 105–125 (VHGYVVFWLSILCILIIIFVY).

The protein localises to the membrane. This is an uncharacterized protein from Methanocaldococcus jannaschii (strain ATCC 43067 / DSM 2661 / JAL-1 / JCM 10045 / NBRC 100440) (Methanococcus jannaschii).